Reading from the N-terminus, the 97-residue chain is Aspartyl/glutamyl-tRNA(Asn/Gln) amidotransferase subunit C (97 aa).

This sequence belongs to the GatC family. In terms of assembly, heterotrimer of A, B and C subunits.

The catalysed reaction is L-glutamyl-tRNA(Gln) + L-glutamine + ATP + H2O = L-glutaminyl-tRNA(Gln) + L-glutamate + ADP + phosphate + H(+). It catalyses the reaction L-aspartyl-tRNA(Asn) + L-glutamine + ATP + H2O = L-asparaginyl-tRNA(Asn) + L-glutamate + ADP + phosphate + 2 H(+). Functionally, allows the formation of correctly charged Asn-tRNA(Asn) or Gln-tRNA(Gln) through the transamidation of misacylated Asp-tRNA(Asn) or Glu-tRNA(Gln) in organisms which lack either or both of asparaginyl-tRNA or glutaminyl-tRNA synthetases. The reaction takes place in the presence of glutamine and ATP through an activated phospho-Asp-tRNA(Asn) or phospho-Glu-tRNA(Gln). The chain is Aspartyl/glutamyl-tRNA(Asn/Gln) amidotransferase subunit C from Synechococcus sp. (strain CC9902).